A 466-amino-acid polypeptide reads, in one-letter code: Probable WRKY transcription factor 32 (466 aa).

2 disordered regions span residues 1-45 and 140-166; these read MEED…MEDL and SVPTKQEQRSDSPVVNRLSVTPVPRTP. Positions 8-38 are enriched in basic and acidic residues; sequence DEAKTYTVEKSEKVEPEKDGLSQFRDEEKSL. Residues 162–226 constitute a DNA-binding region (WRKY 1); the sequence is VPRTPARDGY…NKGLHTHEPP (65 aa). 4 residues coordinate Zn(2+): Cys193, Cys198, His221, and His223. Positions 284–317 are disordered; sequence HCENEAVEEPEPKRRLKKDNSQSSDSVSKPGKKN. The WRKY 2 DNA-binding region spans 325–390; it reads GDVGICGDGY…YKGVHNHDMP (66 aa). Residues Cys356, Cys361, His385, and His387 each coordinate Zn(2+). The tract at residues 410–439 is disordered; the sequence is TSMRTRTDDQVNIPTSSQCSVGRESEKQSK. Residues 419 to 429 are compositionally biased toward polar residues; the sequence is QVNIPTSSQCS.

Belongs to the WRKY group I family.

The protein resides in the nucleus. Transcription factor. Interacts specifically with the W box (5'-(T)TGAC[CT]-3'), a frequently occurring elicitor-responsive cis-acting element. The protein is Probable WRKY transcription factor 32 (WRKY32) of Arabidopsis thaliana (Mouse-ear cress).